A 319-amino-acid chain; its full sequence is Transmembrane and ubiquitin-like domain-containing protein 2 (319 aa).

A helical membrane pass occupies residues 36-56 (VMVVAGVVALTLALVLAWLST). Disordered stretches follow at residues 88–128 (VNQG…ARGE) and 145–165 (RQAG…DGSC). The span at 95 to 111 (PTEHPHPSGGNDDKAEE) shows a compositional bias: basic and acidic residues. In terms of domain architecture, Ubiquitin-like spans 173–246 (INVRLKFLND…IHCHRSPPGA (74 aa)). 2 consecutive transmembrane segments (helical) span residues 264–284 (LGVN…GVVW) and 298–318 (ATIS…GMYG).

The protein resides in the membrane. This is Transmembrane and ubiquitin-like domain-containing protein 2 (Tmub2) from Mus musculus (Mouse).